A 131-amino-acid chain; its full sequence is MSMSDPIADMLTRIRNGQIAGHSNVVMPSSKVKVAVAKVLTGEGYVSSYSVSDKNGKSELSVDLKYFEGQPVIEMLKRVSRPGLRVYKNKDELPKVIGGLGVAVVSTSKGIMSDRDARKAGIGGEIICYIA.

This sequence belongs to the universal ribosomal protein uS8 family. In terms of assembly, part of the 30S ribosomal subunit. Contacts proteins S5 and S12.

Its function is as follows. One of the primary rRNA binding proteins, it binds directly to 16S rRNA central domain where it helps coordinate assembly of the platform of the 30S subunit. The chain is Small ribosomal subunit protein uS8 from Hydrogenovibrio crunogenus (strain DSM 25203 / XCL-2) (Thiomicrospira crunogena).